A 181-amino-acid chain; its full sequence is Translationally-controlled tumor protein homolog (181 aa).

The region spanning 1-181 (MLIFKDAFTD…VKEALVEEKQ (181 aa)) is the TCTP domain.

It belongs to the TCTP family.

The protein resides in the cytoplasm. Functionally, involved in calcium binding and microtubule stabilization. This is Translationally-controlled tumor protein homolog from Wuchereria bancrofti.